The sequence spans 298 residues: Ribosomal RNA small subunit methyltransferase H (298 aa).

S-adenosyl-L-methionine contacts are provided by residues 35-37, Asp55, Phe82, Asp100, and Gln107; that span reads GGH.

This sequence belongs to the methyltransferase superfamily. RsmH family.

It localises to the cytoplasm. The enzyme catalyses cytidine(1402) in 16S rRNA + S-adenosyl-L-methionine = N(4)-methylcytidine(1402) in 16S rRNA + S-adenosyl-L-homocysteine + H(+). In terms of biological role, specifically methylates the N4 position of cytidine in position 1402 (C1402) of 16S rRNA. This chain is Ribosomal RNA small subunit methyltransferase H, found in Chlamydia abortus (strain DSM 27085 / S26/3) (Chlamydophila abortus).